A 413-amino-acid chain; its full sequence is Serine hydroxymethyltransferase (413 aa).

(6S)-5,6,7,8-tetrahydrofolate contacts are provided by residues Leu-119 and 123–125 (GHL). N6-(pyridoxal phosphate)lysine is present on Lys-228. Glu-243 contributes to the (6S)-5,6,7,8-tetrahydrofolate binding site.

This sequence belongs to the SHMT family. Homodimer. The cofactor is pyridoxal 5'-phosphate.

It localises to the cytoplasm. The enzyme catalyses (6R)-5,10-methylene-5,6,7,8-tetrahydrofolate + glycine + H2O = (6S)-5,6,7,8-tetrahydrofolate + L-serine. It functions in the pathway one-carbon metabolism; tetrahydrofolate interconversion. Its pathway is amino-acid biosynthesis; glycine biosynthesis; glycine from L-serine: step 1/1. In terms of biological role, catalyzes the reversible interconversion of serine and glycine with tetrahydrofolate (THF) serving as the one-carbon carrier. This reaction serves as the major source of one-carbon groups required for the biosynthesis of purines, thymidylate, methionine, and other important biomolecules. Also exhibits THF-independent aldolase activity toward beta-hydroxyamino acids, producing glycine and aldehydes, via a retro-aldol mechanism. This Desulforamulus reducens (strain ATCC BAA-1160 / DSM 100696 / MI-1) (Desulfotomaculum reducens) protein is Serine hydroxymethyltransferase.